The primary structure comprises 506 residues: Ecdysteroid UDP-glucosyltransferase (506 aa).

Residues 1 to 18 (MTAYLIVFCLCCWSAARS) form the signal peptide.

This sequence belongs to the UDP-glycosyltransferase family.

In terms of biological role, catalyzes the transfer of glucose from UDP-glucose to ecdysteroids which are insect molting hormones. Expression of egt interferes with normal insect development and block molting. The protein is Ecdysteroid UDP-glucosyltransferase (EGT) of Lymantria dispar multicapsid nuclear polyhedrosis virus (LdMNPV).